The chain runs to 403 residues: Betaine--homocysteine S-methyltransferase 1 (403 aa).

Residues 8-311 (KGLLERLDAG…YHTRAIAEEL (304 aa)) enclose the Hcy-binding domain. Zn(2+)-binding residues include Cys214, Cys296, and Cys297.

As to quaternary structure, homotetramer. Zn(2+) is required as a cofactor.

It is found in the cytoplasm. It carries out the reaction L-homocysteine + glycine betaine = N,N-dimethylglycine + L-methionine. The protein operates within amine and polyamine degradation; betaine degradation; sarcosine from betaine: step 1/2. It participates in amino-acid biosynthesis; L-methionine biosynthesis via de novo pathway; L-methionine from L-homocysteine (BhmT route): step 1/1. Functionally, involved in the regulation of homocysteine metabolism. Converts betaine and homocysteine to dimethylglycine and methionine, respectively. This reaction is also required for the irreversible oxidation of choline. In Xenopus laevis (African clawed frog), this protein is Betaine--homocysteine S-methyltransferase 1 (bhmt).